Consider the following 126-residue polypeptide: Protein LiaI (126 aa).

Helical transmembrane passes span 11–31 (FLLI…GFII) and 56–76 (IIVG…VVGI).

Its subcellular location is the cell membrane. The polypeptide is Protein LiaI (liaI) (Bacillus subtilis (strain 168)).